A 148-amino-acid chain; its full sequence is UPF0758 protein YeeS (148 aa).

An MPN domain is found at 26–148; the sequence is AFTSTRAARE…VFSFAEHGLL (123 aa). Zn(2+)-binding residues include His97, His99, and Asp110. The JAMM motif signature appears at 97–110; it reads HNHPSGEVTPSKAD.

Belongs to the UPF0758 family.

The chain is UPF0758 protein YeeS (yeeS) from Escherichia coli (strain K12).